The following is a 768-amino-acid chain: UPF0313 protein VV2143 (768 aa).

In terms of domain architecture, Radical SAM core spans 363–640 (AYDMIKTSVN…LHKALLRYHD (278 aa)). Residues cysteine 377, cysteine 381, and cysteine 384 each coordinate [4Fe-4S] cluster. The tract at residues 674-768 (DARTPAQRRK…GGRNQPSRAR (95 aa)) is disordered. Residues 679-689 (AQRRKSGRHGA) are compositionally biased toward basic residues. Residues 719 to 731 (GGQSNSAPSRSGS) are compositionally biased toward polar residues.

Belongs to the UPF0313 family. It depends on [4Fe-4S] cluster as a cofactor.

The protein is UPF0313 protein VV2143 of Vibrio vulnificus (strain YJ016).